A 200-amino-acid polypeptide reads, in one-letter code: uncharacterized protein (200 aa).

This is an uncharacterized protein from Commelina yellow mottle virus (CoYMV).